The primary structure comprises 202 residues: UPF0316 protein SH1041 (202 aa).

3 consecutive transmembrane segments (helical) span residues 8-28, 40-60, and 66-86; these read PWSMVLAIFVINVFYVTFLTM, MAAAVSFLEVLVYVVGLGMVM, and IQNIFAYAFGFSIGILVGMKI.

It belongs to the UPF0316 family.

The protein resides in the cell membrane. In Staphylococcus haemolyticus (strain JCSC1435), this protein is UPF0316 protein SH1041.